We begin with the raw amino-acid sequence, 628 residues long: LRR receptor kinase SERK2 (628 aa).

The first 31 residues, 1–31 (MAEARLLRRRRLCLAVPFVWVVAVAVSRVGA), serve as a signal peptide directing secretion. LRR repeat units lie at residues 97-121 (LKNL…LGNL), 123-144 (NLVS…TLGQ), 145-169 (LYKL…LTNI), and 170-194 (TTLQ…SFSL). N-linked (GlcNAc...) asparagine glycans are attached at residues N109, N120, N133, N155, N168, and N181. A helical transmembrane segment spans residues 243-263 (AIAGGVAAAAALLFAVPAIGF). Position 303 is a phosphothreonine (T303). Residues 306–593 (FSNKNILGRG…GLAERWEEWQ (288 aa)) enclose the Protein kinase domain. Residue 312–320 (LGRGGFGKV) participates in ATP binding. Phosphoserine is present on S329. K334 serves as a coordination point for ATP. T350 bears the Phosphothreonine mark. Phosphoserine is present on residues S356 and S387. The active-site Proton acceptor is the D433. 3 positions are modified to phosphothreonine: T463, T466, and T472. S615 is modified (phosphoserine). A Phosphothreonine modification is found at T616. S625 carries the phosphoserine modification.

Belongs to the protein kinase superfamily. Ser/Thr protein kinase family. As to quaternary structure, interacts with BRI1. Interacts with XA21, XA26/XA3 and FLS2. Post-translationally, autophosphorylated on serine and threonine residues. As to expression, expressed in flag leaves. Expressed in roots, shoot apex, leaf blades, leaf sheaths, panicles and flowers. Expressed leaves, stems, sheaths and flowers.

The protein localises to the cell membrane. The enzyme catalyses L-seryl-[protein] + ATP = O-phospho-L-seryl-[protein] + ADP + H(+). The catalysed reaction is L-threonyl-[protein] + ATP = O-phospho-L-threonyl-[protein] + ADP + H(+). In terms of biological role, LRR receptor kinase involved in positive regulation of somatic embryogenesis and defense response against the rice blast fungus pathogen Magnaporthe oryzae. Involved in the positive regulation of receptor kinase-mediated immunity. Required for immunity mediated by the LRR receptor kinases XA21 and XA26/XA3 which recognize effectors from the bacterial pathogen Xanthomonas oryzae pv. oryzae (Xoo). Required for the immune response mediated by the LRR receptor kinase FLS2 which recognizes specifically the bacterial flagellin (flg22) effector. Kinase activity and direct interaction with the immune receptors is critical for their function. Involved in the regulation of plant growth through the brassinosteroid (BR) signaling pathway. This chain is LRR receptor kinase SERK2, found in Oryza sativa subsp. japonica (Rice).